Here is a 288-residue protein sequence, read N- to C-terminus: Cell division protein DivIB (288 aa).

At 1 to 25 (MEKVIDITERVPAMKKRRRRRTNFK) the chain is on the cytoplasmic side. A helical transmembrane segment spans residues 26–46 (FLALVTIFLFIIIILLYFQLP). Over 47 to 288 (YSDIKKIDIK…LEEQNEEEPE (242 aa)) the chain is Extracellular. The 69-residue stretch at 48–116 (SDIKKIDIKG…NEVQITVEEW (69 aa)) folds into the POTRA domain. The span at 253–263 (LIKENTEKTEE) shows a compositional bias: basic and acidic residues. Residues 253–288 (LIKENTEKTEEPAEETENADTEEGGQLEEQNEEEPE) are disordered. Acidic residues predominate over residues 264–288 (PAEETENADTEEGGQLEEQNEEEPE).

This sequence belongs to the FtsQ/DivIB family. DivIB subfamily.

The protein resides in the cell membrane. Its function is as follows. Cell division protein that may be involved in stabilizing or promoting the assembly of the division complex. This is Cell division protein DivIB from Solibacillus silvestris (strain StLB046) (Bacillus silvestris).